A 393-amino-acid polypeptide reads, in one-letter code: Putative zinc metalloprotease Rip3 (393 aa).

2 helical membrane passes run 10-30 and 45-65; these read IAGF…LFTW and AVVY…SLLA. Residue His-66 participates in Zn(2+) binding. Residue Glu-67 is part of the active site. His-70 contributes to the Zn(2+) binding site. The next 4 helical transmembrane spans lie at 77-97, 108-128, 136-156, and 207-227; these read AGVS…ALGG, IAFA…ALAI, PAIV…LGLF, and FVAG…FIFA. CBS domains are found at residues 251–308 and 315–376; these read MTAQ…RRST and ALPL…AQPE.

This sequence belongs to the peptidase M50B family. It depends on Zn(2+) as a cofactor.

The protein resides in the cell membrane. The protein is Putative zinc metalloprotease Rip3 (rip3) of Mycobacterium tuberculosis (strain ATCC 35801 / TMC 107 / Erdman).